The sequence spans 207 residues: Small ribosomal subunit protein uS4 (207 aa).

Residues 33 to 54 (KLDSKPGQHGRTSGARTSDYGN) form a disordered region. Over residues 42 to 53 (GRTSGARTSDYG) the composition is skewed to polar residues. The region spanning 97-157 (SRLDNVVYRM…EKSKKQVRIA (61 aa)) is the S4 RNA-binding domain.

The protein belongs to the universal ribosomal protein uS4 family. In terms of assembly, part of the 30S ribosomal subunit. Contacts protein S5. The interaction surface between S4 and S5 is involved in control of translational fidelity.

Functionally, one of the primary rRNA binding proteins, it binds directly to 16S rRNA where it nucleates assembly of the body of the 30S subunit. With S5 and S12 plays an important role in translational accuracy. The chain is Small ribosomal subunit protein uS4 from Ralstonia pickettii (strain 12J).